A 522-amino-acid chain; its full sequence is Perilipin-1 (522 aa).

At S81 the chain carries Phosphoserine. T85 carries the phosphothreonine modification. 5 positions are modified to phosphoserine: S126, S130, S132, S137, and S174. 2 disordered regions span residues D195 to S217 and L287 to K318. The segment covering Q291–T314 has biased composition (acidic residues). Residues Q291–F319 are required for interaction with CIDEC. 2 positions are modified to phosphothreonine: T299 and T301. A phosphoserine mark is found at S382, S384, and S408. The disordered stretch occupies residues E413–S522. The segment covering S414 to A435 has biased composition (basic and acidic residues). Phosphoserine occurs at positions 436, 497, and 499.

It belongs to the perilipin family. In terms of assembly, interacts with ABHD5. Interacts with CIDEC. Interacts with AQP7. Post-translationally, major cAMP-dependent protein kinase-substrate in adipocytes, also dephosphorylated by PP1. When phosphorylated, may be maximally sensitive to HSL and when unphosphorylated, may play a role in the inhibition of lipolysis, by acting as a barrier in lipid droplet. As to expression, detected in adipocytes from white adipose tissue (at protein level). Detected in visceral adipose tissue and mammary gland.

The protein localises to the endoplasmic reticulum. It is found in the lipid droplet. Its function is as follows. Modulator of adipocyte lipid metabolism. Coats lipid storage droplets to protect them from breakdown by hormone-sensitive lipase (HSL). Its absence may result in leanness. Plays a role in unilocular lipid droplet formation by activating CIDEC. Their interaction promotes lipid droplet enlargement and directional net neutral lipid transfer. May modulate lipolysis and triglyceride levels. This chain is Perilipin-1 (PLIN1), found in Homo sapiens (Human).